Here is a 343-residue protein sequence, read N- to C-terminus: Dihydroorotase (343 aa).

Positions 14 and 16 each coordinate Zn(2+). Substrate contacts are provided by residues 16–18 (HLR) and Asn42. Residues Lys99, His136, and His174 each contribute to the Zn(2+) site. Lys99 is subject to N6-carboxylysine. Residue His136 coordinates substrate. Position 219 (Leu219) interacts with substrate. Asp247 lines the Zn(2+) pocket. Asp247 is an active-site residue. Residues His251 and Ala263 each contribute to the substrate site.

This sequence belongs to the metallo-dependent hydrolases superfamily. DHOase family. Class II DHOase subfamily. In terms of assembly, homodimer. Zn(2+) is required as a cofactor.

The enzyme catalyses (S)-dihydroorotate + H2O = N-carbamoyl-L-aspartate + H(+). It functions in the pathway pyrimidine metabolism; UMP biosynthesis via de novo pathway; (S)-dihydroorotate from bicarbonate: step 3/3. In terms of biological role, catalyzes the reversible cyclization of carbamoyl aspartate to dihydroorotate. This is Dihydroorotase from Psychromonas ingrahamii (strain DSM 17664 / CCUG 51855 / 37).